Here is a 443-residue protein sequence, read N- to C-terminus: METKALWEKLINKLKKEKLIDQDIIEEYIVTSELIKISNTEFVILVRSNLGVTILNEFKEVFVYEFKSVLNSYVSVDFLTKEIFEKNTKKENKKEPINTVLSENALTFENFIVGSSNKQANLAAKNVVANPGMSFNPLFIYGDSGLGKTHLLQAIKNQAELNGKKVLYLTSEEFTKRIVNALNKGDLSEIEELKTEINSNEFFILDDVQFLSKKDKTNEFFFNIINNFTENGKQLVFSSDKTPELLNGFDKRMITRFNSGLSTPINALDIPTAKLIIEAEIKKQGLKQKIKEDAVVYLAQNFSDDVRKIKGLVNRLLFFGIQNDLGHIIDLEDVIDLFKDTPSANLGLLNVKKIKEVVAKKYDVTIKAIDGKARTTAIKNARHLSMYFAKIILNHTSTQIGAEFGGRDHSTVLSAISRIEKLIYKEKEFKKIVESLKNEIIGK.

The domain I, interacts with DnaA modulators stretch occupies residues 1–76 (METKALWEKL…KSVLNSYVSV (76 aa)). The domain II stretch occupies residues 76–99 (VDFLTKEIFEKNTKKENKKEPINT). Positions 100-320 (VLSENALTFE…GLVNRLLFFG (221 aa)) are domain III, AAA+ region. 4 residues coordinate ATP: Gly145, Gly147, Lys148, and Thr149. Residues 321–443 (IQNDLGHIID…ESLKNEIIGK (123 aa)) are domain IV, binds dsDNA.

The protein belongs to the DnaA family. In terms of assembly, oligomerizes as a right-handed, spiral filament on DNA at oriC.

It is found in the cytoplasm. Its function is as follows. Plays an essential role in the initiation and regulation of chromosomal replication. ATP-DnaA binds to the origin of replication (oriC) to initiate formation of the DNA replication initiation complex once per cell cycle. Binds the DnaA box (a 9 base pair repeat at the origin) and separates the double-stranded (ds)DNA. Forms a right-handed helical filament on oriC DNA; dsDNA binds to the exterior of the filament while single-stranded (ss)DNA is stabiized in the filament's interior. The ATP-DnaA-oriC complex binds and stabilizes one strand of the AT-rich DNA unwinding element (DUE), permitting loading of DNA polymerase. After initiation quickly degrades to an ADP-DnaA complex that is not apt for DNA replication. Binds acidic phospholipids. This Mesoplasma florum (strain ATCC 33453 / NBRC 100688 / NCTC 11704 / L1) (Acholeplasma florum) protein is Chromosomal replication initiator protein DnaA.